A 476-amino-acid chain; its full sequence is Acidic leucine-rich nuclear phosphoprotein 32-related protein 1 (476 aa).

3 LRR repeats span residues 51 to 72 (SLEH…PRLR), 73 to 92 (NLTR…DHLV), and 98 to 119 (SLRD…SPLA). An LRRCT domain is found at 131–169 (CPVTRVKDYRSKVFGMIRTLKYLDKMDADENERPESDDD). The tract at residues 157–476 (DADENERPES…VEDLRPFKHH (320 aa)) is disordered. Composition is skewed to acidic residues over residues 165-194 (ESDD…EDPG), 222-232 (DVDEDESDADE), 252-289 (GDED…EDAV), 299-329 (SDEE…EAEP), 353-371 (EGED…EERL), 379-396 (EGND…EDTE), 415-436 (DAAE…DDGG), and 458-467 (GDDDEDDDGV).

The protein belongs to the ANP32 family.

This chain is Acidic leucine-rich nuclear phosphoprotein 32-related protein 1, found in Oryza sativa subsp. japonica (Rice).